We begin with the raw amino-acid sequence, 483 residues long: Probable zinc metalloprotease PTT_08196 (483 aa).

The first 18 residues, 1–18, serve as a signal peptide directing secretion; that stretch reads MLFRSVILSNALLLPACA. Residues Asn96 and Asn121 are each glycosylated (N-linked (GlcNAc...) asparagine). Residues His167, Asp187, and Glu220 each contribute to the Zn(2+) site. Asn235 carries an N-linked (GlcNAc...) asparagine glycan. Residue Asp247 participates in Zn(2+) binding. Residues Asn310, Asn362, Asn401, Asn411, and Asn421 are each glycosylated (N-linked (GlcNAc...) asparagine). The Fibronectin type-III domain occupies 396-483; that stretch reads PAMPRNVTID…KSPAVYPFPA (88 aa).

It belongs to the peptidase M28 family. M28B subfamily. Zn(2+) is required as a cofactor.

Its subcellular location is the secreted. This chain is Probable zinc metalloprotease PTT_08196, found in Pyrenophora teres f. teres (strain 0-1) (Barley net blotch fungus).